We begin with the raw amino-acid sequence, 473 residues long: Uronate isomerase (473 aa).

The protein belongs to the metallo-dependent hydrolases superfamily. Uronate isomerase family.

It catalyses the reaction D-glucuronate = D-fructuronate. The enzyme catalyses aldehydo-D-galacturonate = keto-D-tagaturonate. It participates in carbohydrate metabolism; pentose and glucuronate interconversion. The sequence is that of Uronate isomerase (uxaC) from Geobacillus stearothermophilus (Bacillus stearothermophilus).